The following is a 352-amino-acid chain: C-C chemokine receptor type 5 (352 aa).

Residues 1–30 (MDYQVSSPIYDIDYGPSEPCRKIDVKQMGA) are Extracellular-facing. Tyr-3 is modified (sulfotyrosine). Ser-6 and Ser-7 each carry an O-linked (GalNAc...) serine glycan. Sulfotyrosine is present on residues Tyr-10 and Tyr-14. Disulfide bonds link Cys-20/Cys-269 and Cys-101/Cys-178. Residues 31–58 (QLLPPLYSLVFLFGFVGNMLVVLILINC) form a helical membrane-spanning segment. The Cytoplasmic segment spans residues 59-68 (KRLKSMTDIY). A helical membrane pass occupies residues 69 to 89 (LLNLAISDLLFLFTIPFWAHY). The Extracellular segment spans residues 90 to 102 (AAGQWDFGNTMCQ). The chain crosses the membrane as a helical span at residues 103–124 (FLTALYFIGFFSGIFFIILLTI). At 125 to 141 (DRYLAIVHAVFALKART) the chain is on the cytoplasmic side. A helical transmembrane segment spans residues 142 to 166 (VTFGVVTSVITWVVAVFASLPGIIF). Residues 167-198 (TRSQKEGYHYSCSPHFPFSQYRFWKNFETLKM) are Extracellular-facing. A helical membrane pass occupies residues 199–218 (VILGLVLPLLVMVICYSGIL). Over 219-235 (KTLLRCRNEKKRHRAVR) the chain is Cytoplasmic. Residues 236–260 (LIFTIMIVYFLFWAPYNIVLLINTY) form a helical membrane-spanning segment. The Extracellular segment spans residues 261 to 277 (PDFFGVNNCNSSNRLDQ). The chain crosses the membrane as a helical span at residues 278–301 (AMQVTETLGMTHCCVNPIIYAFVG). Topologically, residues 302–352 (EKFRNYLVIFFQKHIAKRFCKCCSIFQKEAPERANSVYTRSTGEQEISVGL) are cytoplasmic. S-palmitoyl cysteine attachment occurs at residues Cys-321, Cys-323, and Cys-324. Phosphoserine; by BARK1 occurs at positions 337, 342, and 349.

Belongs to the G-protein coupled receptor 1 family. Interacts with PRAF2. Efficient ligand binding to CCL3/MIP-1alpha and CCL4/MIP-1beta requires sulfation, O-glycosylation and sialic acid modifications. Glycosylation on Ser-6 is required for efficient binding of CCL4. Interacts with GRK2. Interacts with ARRB1 and ARRB2. Interacts with CNIH4. Interacts with S100A4; this interaction stimulates T-lymphocyte chemotaxis. Post-translationally, sulfated on at least 2 of the N-terminal tyrosines. Sulfation is required for efficient binding of the chemokines, CCL3 and CCL4. In terms of processing, palmitoylation in the C-terminal is important for cell surface expression. Phosphorylation on serine residues in the C-terminal is stimulated by binding CC chemokines especially by APO-RANTES. Post-translationally, O-glycosylated, but not N-glycosylated. Ser-6 appears to be the major site even if Ser-7 may be also O-glycosylated. Also sialylated glycans present which contribute to chemokine binding. Ser-17 may also be glycosylated and, if so, with small moieties such as a T-antigen.

It localises to the cell membrane. Receptor for a number of inflammatory CC-chemokines including CCL3/MIP-1-alpha, CCL4/MIP-1-beta and RANTES and subsequently transduces a signal by increasing the intracellular calcium ion level. May play a role in the control of granulocytic lineage proliferation or differentiation. Participates in T-lymphocyte migration to the infection site by acting as a chemotactic receptor. This chain is C-C chemokine receptor type 5 (CCR5), found in Saimiri sciureus (Common squirrel monkey).